The following is a 287-amino-acid chain: Inositol diphosphatase siw14 (287 aa).

Residues 85 to 256 form the Tyrosine-protein phosphatase domain; that stretch reads NFGVVYPGII…LNDLKRYISD (172 aa). Residues Ser156 and Ser159 each carry the phosphoserine modification. The active-site Phosphocysteine intermediate is the Cys189.

It belongs to the protein-tyrosine phosphatase family. Atypical dual-specificity phosphatase Siw14-like subfamily.

It is found in the cytoplasm. Its subcellular location is the nucleus. The enzyme catalyses 5-diphospho-1D-myo-inositol 1,2,3,4,6-pentakisphosphate + H2O = 1D-myo-inositol hexakisphosphate + phosphate + H(+). It catalyses the reaction 1-diphospho-1D-myo-inositol 2,3,4,5,6-pentakisphosphate + H2O = 1D-myo-inositol hexakisphosphate + phosphate + H(+). It carries out the reaction 1,5-bis(diphospho)-1D-myo-inositol 2,3,4,6-tetrakisphosphate + H2O = 1-diphospho-1D-myo-inositol 2,3,4,5,6-pentakisphosphate + phosphate + 2 H(+). Its activity is regulated as follows. Activity is inhibited by the reaction product inorganic phosphate and by sulfate (a phosphate mimetic). Not inhibited by magnesium. Its function is as follows. Cleaves the beta-phosphate at the 1- and 5-position of soluble inositol pyrophosphates. Has exopolyphosphatase activity in vitro but does not appear to contribute to the homeostasis of cellular polyphosphate. The sequence is that of Inositol diphosphatase siw14 from Schizosaccharomyces pombe (strain 972 / ATCC 24843) (Fission yeast).